The primary structure comprises 345 residues: Opioid-binding protein/cell adhesion molecule (345 aa).

The signal sequence occupies residues 1–27 (MGVCGYLFLPWKCLVVVSLRLLFLVPT). Ig-like C2-type domains are found at residues 39-126 (PKAM…PKTS), 136-219 (PQIM…VKIT), and 223-310 (PPYI…ASIT). Asn44, Asn70, and Asn140 each carry an N-linked (GlcNAc...) asparagine glycan. Residues Cys57 and Cys115 are joined by a disulfide bond. 2 disulfides stabilise this stretch: Cys157-Cys202 and Cys244-Cys296. Asn285, Asn293, and Asn306 each carry an N-linked (GlcNAc...) asparagine glycan. Asn322 carries GPI-anchor amidated asparagine lipidation. The propeptide at 323–345 (SASRALACLWLSGTLLAHFFIKF) is removed in mature form.

It belongs to the immunoglobulin superfamily. IgLON family.

The protein resides in the cell membrane. Binds opioids in the presence of acidic lipids; probably involved in cell contact. The chain is Opioid-binding protein/cell adhesion molecule (OPCML) from Homo sapiens (Human).